The following is a 323-amino-acid chain: tRNA dimethylallyltransferase (323 aa).

Glycine 12–threonine 19 is an ATP binding site. Threonine 14–threonine 19 contacts substrate. 2 interaction with substrate tRNA regions span residues aspartate 37 to leucine 40 and glutamine 161 to arginine 165.

It belongs to the IPP transferase family. In terms of assembly, monomer. It depends on Mg(2+) as a cofactor.

It carries out the reaction adenosine(37) in tRNA + dimethylallyl diphosphate = N(6)-dimethylallyladenosine(37) in tRNA + diphosphate. Catalyzes the transfer of a dimethylallyl group onto the adenine at position 37 in tRNAs that read codons beginning with uridine, leading to the formation of N6-(dimethylallyl)adenosine (i(6)A). This Pseudomonas putida (strain ATCC 47054 / DSM 6125 / CFBP 8728 / NCIMB 11950 / KT2440) protein is tRNA dimethylallyltransferase.